A 502-amino-acid polypeptide reads, in one-letter code: Glycerol kinase (502 aa).

Residue T14 participates in ADP binding. ATP contacts are provided by T14, T15, and S16. Residue T14 participates in sn-glycerol 3-phosphate binding. R18 lines the ADP pocket. R84, E85, Y136, and D246 together coordinate sn-glycerol 3-phosphate. Glycerol contacts are provided by R84, E85, Y136, D246, and Q247. Residues T268 and G311 each coordinate ADP. T268, G311, Q315, and G412 together coordinate ATP. Positions 412 and 416 each coordinate ADP.

It belongs to the FGGY kinase family. Homotetramer and homodimer (in equilibrium). Heterodimer with EIIA-Glc. Binds 1 zinc ion per glycerol kinase EIIA-Glc dimer. The zinc ion is important for dimerization.

It carries out the reaction glycerol + ATP = sn-glycerol 3-phosphate + ADP + H(+). It participates in polyol metabolism; glycerol degradation via glycerol kinase pathway; sn-glycerol 3-phosphate from glycerol: step 1/1. Activity of this regulatory enzyme is affected by several metabolites. Allosterically and non-competitively inhibited by fructose 1,6-bisphosphate (FBP) and unphosphorylated phosphocarrier protein EIIA-Glc (III-Glc), an integral component of the bacterial phosphotransferase (PTS) system. Its function is as follows. Key enzyme in the regulation of glycerol uptake and metabolism. Catalyzes the phosphorylation of glycerol to yield sn-glycerol 3-phosphate. The polypeptide is Glycerol kinase (Escherichia coli O8 (strain IAI1)).